We begin with the raw amino-acid sequence, 120 residues long: Large ribosomal subunit protein bL19 (120 aa).

This sequence belongs to the bacterial ribosomal protein bL19 family.

This protein is located at the 30S-50S ribosomal subunit interface and may play a role in the structure and function of the aminoacyl-tRNA binding site. This chain is Large ribosomal subunit protein bL19, found in Microcystis aeruginosa (strain NIES-843 / IAM M-2473).